The sequence spans 103 residues: U-scoloptoxin(24)-Er1a (103 aa).

The first 23 residues, 1 to 23 (MVKSLHCLIGIVLFLAILNAGNG), serve as a signal peptide directing secretion.

This sequence belongs to the scoloptoxin-24 family. In terms of processing, contains 1 disulfide bond. Expressed by the venom gland.

It is found in the secreted. This Ethmostigmus rubripes (Giant centipede) protein is U-scoloptoxin(24)-Er1a.